We begin with the raw amino-acid sequence, 924 residues long: MQIPKYENKPFKPPRRVGSNKYTQLKPTATAVTTAPISKAKVTVNLKRSISAGPTLNLAKKPNNLSSNENTRYFTIMYRKPTTKKHKTWSGDGYATLKASSDKLCFYNEAGKFLGSSMLPSDSDSLFETLFKAGSNEVQLDYELKENAEIRSAKEALSQNMGNPNPPTTSTTETVPSTKNDGGKYQMPLSQLFSLNTVKRFKSVTKQTNEHMTTVPKTSQNSKAKKYYPVFDVNKIDNPIVMNKNAAAEVDVIVDPLLGKFLRPHQREGVKFMYDCLMGLARPTIENPDIDCTTKSLVLENDSDISGCLLADDMGLGKTLMSITLIWTLIRQTPFASKVSCSQSGIPLTGLCKKILVVCPVTLIGNWKREFGKWLNLSRIGVLTLSSRNSPDMDKMAVRNFLKVQRTYQVLIIGYEKLLSVSEELEKNKHLIDMLVCDEGHRLKNGASKILNTLKSLDIRRKLLLTGTPIQNDLNEFFTIIDFINPGILGSFASFKRRFIIPITRARDTANRYNEELLEKGEERSKEMIEITKRFILRRTNAILEKYLPPKTDIILFCKPYSQQILAFKDILQGARLDFGRLTFSSSLGLITLLKKVCNSPGLVGSDPYYKSHIKDTQSQDSYSRSLNSGKLRVLMTLLEGIRKGTKEKVVVVSNYTQTLDIIENLMNMAGMSHCRLDGSIPAKQRDSIVTSFNRNPAIFGFLLSAKSGGVGLNLVGASRLILFDNDWNPSVDLQAMSRIHRDGQKKPCFIYRLVTTGCIDEKILQRQLMKNSLSQKFLGDSEMRNKESSNDDLFNKEDLKDLFSVHTDTKSNTHDLICSCDGLGEEIEYPETNQQQNTVELRKRSTTTWTSALDLQKKMNEAATNDDAKKSQYIRQCLVHYKHIDPARQDELFDEVITDSFTDLKDSITFAFVKPGEICLREQ.

Residues 1 to 10 show a composition bias toward basic and acidic residues; sequence MQIPKYENKP. 2 disordered regions span residues 1–21 and 155–183; these read MQIPKYENKPFKPPRRVGSNK and EALSQNMGNPNPPTTSTTETVPSTKNDGG. Low complexity predominate over residues 168 to 178; sequence TTSTTETVPST. The 189-residue stretch at 299-487 folds into the Helicase ATP-binding domain; the sequence is LENDSDISGC…FTIIDFINPG (189 aa). 346-353 contacts ATP; the sequence is IPLTGLCK. Residues 472–475 carry the DEGH box motif; it reads NDLN. A Glycyl lysine isopeptide (Lys-Gly) (interchain with G-Cter in ubiquitin) cross-link involves residue K615. The Helicase C-terminal domain maps to 631 to 790; it reads KLRVLMTLLE…DSEMRNKESS (160 aa).

The protein belongs to the SNF2/RAD54 helicase family. As to quaternary structure, interacts with RAD51 and DMC1.

It is found in the nucleus. The catalysed reaction is ATP + H2O = ADP + phosphate + H(+). In terms of biological role, involved in the recombinational repair of double-strand breaks (DSB) in DNA during mitosis and meiosis. Has DNA dependent ATPase activity. Promotes D-loop (displacement loop) formation with RAD51 recombinase. Modifies the topology of double-stranded DNA during the D-loop reaction to facilitate the invasion of the homologous duplex molecule by the initiating single-stranded DNA substrate. Required for adaptation from G2/M checkpoint arrest induced by a double strand break, by participating in monitoring the extent of single-stranded DNA produced by resection of DNA ends. This role is distinct from its roles in recombination. Promotes colocalization of RAD51 and DMC1 during meiotic recombination. Involved in crossover interference. This is DNA repair and recombination protein RDH54 (RDH54) from Saccharomyces cerevisiae (strain RM11-1a) (Baker's yeast).